The sequence spans 157 residues: Large ribosomal subunit protein bL20 (157 aa).

Positions 121-157 are disordered; it reads TSAPAVSAEAAPKAKAAKKPAAKKAAAKKPVAEEAAK. Residues 122 to 134 are compositionally biased toward low complexity; that stretch reads SAPAVSAEAAPKA. Residues 135-147 are compositionally biased toward basic residues; the sequence is KAAKKPAAKKAAA.

The protein belongs to the bacterial ribosomal protein bL20 family.

Binds directly to 23S ribosomal RNA and is necessary for the in vitro assembly process of the 50S ribosomal subunit. It is not involved in the protein synthesizing functions of that subunit. In Arthrobacter sp. (strain FB24), this protein is Large ribosomal subunit protein bL20 (rplT).